A 936-amino-acid polypeptide reads, in one-letter code: Protocadherin alpha-5 (936 aa).

A signal peptide spans 1 to 28; sequence MVYSRRGSLGSRLLLLWLLLAYWKAGSG. Over 29-696 the chain is Extracellular; that stretch reads QLHYSIPEEA…GPEAALVDVN (668 aa). 6 Cadherin domains span residues 33 to 132, 156 to 241, 242 to 349, 350 to 454, 455 to 564, and 580 to 677; these read SIPE…PPRF, ASDL…APEF, DKSI…TPEM, AITT…APAF, AQPQ…APAL, and VPRS…APKA. The N-linked (GlcNAc...) asparagine glycan is linked to Asn264. An N-linked (GlcNAc...) asparagine glycan is attached at Asn547. The helical transmembrane segment at 697 to 717 threads the bilayer; sequence VYLIIAICAVSSLLVLTLLLY. Residues 718–936 are Cytoplasmic-facing; sequence TALRCSAQPT…GNSTTDNSDQ (219 aa). 2 disordered regions span residues 759–793 and 816–936; these read SGEA…PDWR and AGPG…NSDQ. PXXP repeat units lie at residues 773–776, 785–788, 818–821, 873–876, and 877–890; these read PSLP, PRQP, PGGP, KFII, and PGSP…QEPT. The segment at 773–890 is 5 X 4 AA repeats of P-X-X-P; that stretch reads PSLPQGPTST…AIISIRQEPT (118 aa). The span at 774-786 shows a compositional bias: polar residues; it reads SLPQGPTSTDNPR. Positions 895-909 are enriched in basic and acidic residues; the sequence is DKSDFITFGKKEETK.

The protein resides in the cell membrane. Functionally, potential calcium-dependent cell-adhesion protein. May be involved in the establishment and maintenance of specific neuronal connections in the brain. The polypeptide is Protocadherin alpha-5 (PCDHA5) (Homo sapiens (Human)).